The sequence spans 124 residues: Small ribosomal subunit protein uS12 (124 aa).

D89 is modified (3-methylthioaspartic acid).

The protein belongs to the universal ribosomal protein uS12 family. Part of the 30S ribosomal subunit. Contacts proteins S8 and S17. May interact with IF1 in the 30S initiation complex.

Its function is as follows. With S4 and S5 plays an important role in translational accuracy. Functionally, interacts with and stabilizes bases of the 16S rRNA that are involved in tRNA selection in the A site and with the mRNA backbone. Located at the interface of the 30S and 50S subunits, it traverses the body of the 30S subunit contacting proteins on the other side and probably holding the rRNA structure together. The combined cluster of proteins S8, S12 and S17 appears to hold together the shoulder and platform of the 30S subunit. The chain is Small ribosomal subunit protein uS12 from Psychrobacter sp. (strain PRwf-1).